The sequence spans 302 residues: GATA transcription factor 28 (302 aa).

Residues 47-66 (NAGGMSEGVETDIPSHPGNV) are disordered. The Tify domain occupies 77–112 (GSEQGDQLTLSFQGQVYVFDSVLPEKVQAVLLLLGG). The tract at residues 119-141 (APPGLGSPHQNNRVSSLPGTPQR) is disordered. The segment covering 126–141 (PHQNNRVSSLPGTPQR) has biased composition (polar residues). The CCT domain maps to 147–189 (RLASLVRFREKRKGRNFDKKIRYTVRKEVALRMQRNKGQFTSA). The GATA-type zinc-finger motif lies at 217-273 (QHQEISCRHCGIGEKSTPMMRRGPAGPRTLCNACGLMWANKGAFRDLSKASPQTAQN).

This sequence belongs to the type IV zinc-finger family. Class C subfamily. As to expression, predominantly expressed in shoot apices, inflorescences and roots.

The protein localises to the nucleus. Its function is as follows. Transcriptional activator that specifically binds 5'-GATA-3' or 5'-GAT-3' motifs within gene promoters. The sequence is that of GATA transcription factor 28 (GATA28) from Arabidopsis thaliana (Mouse-ear cress).